Consider the following 247-residue polypeptide: MESSSTIDPAEVAKFEAMAAEWWNPHGKFKPLHQMNPCRLDYITQQIAAEFDRDLSAPLPFEGLRLLDIGCGGGLLSEPMARLGAEVIGADAAPRNIPVAKLHAEQSGLAIDYRNTTAEALAAAGERFDVVLNMEVVEHVADPLAYLTACRELLKPGGLMICSTLNRNPKSFAMAIVGAEWVMRWLPKGTHDWSKFITPDELYDLIRKAGLDPVDRKGMVFNPVSWSWSLSARDLSVNYVTASVRRT.

S-adenosyl-L-methionine-binding residues include R39, G70, D91, and M134.

This sequence belongs to the methyltransferase superfamily. UbiG/COQ3 family.

It carries out the reaction a 3-demethylubiquinol + S-adenosyl-L-methionine = a ubiquinol + S-adenosyl-L-homocysteine + H(+). It catalyses the reaction a 3-(all-trans-polyprenyl)benzene-1,2-diol + S-adenosyl-L-methionine = a 2-methoxy-6-(all-trans-polyprenyl)phenol + S-adenosyl-L-homocysteine + H(+). It functions in the pathway cofactor biosynthesis; ubiquinone biosynthesis. Functionally, O-methyltransferase that catalyzes the 2 O-methylation steps in the ubiquinone biosynthetic pathway. In Cereibacter sphaeroides (strain KD131 / KCTC 12085) (Rhodobacter sphaeroides), this protein is Ubiquinone biosynthesis O-methyltransferase.